A 541-amino-acid chain; its full sequence is MAKTIAYDEEARRGLERGLNSLADAVKVTLGPKGRNVVLEKKWGAPTITNDGVSIAKEIELEDPYEKIGAELVKEVAKKTDDVAGDGTTTATVLAQALVREGLRNVAAGANPLGLKRGIEKAVEAVTQGLLKSAKEVETKEQIAATAAISAGDVQIGELIAEAMDKVGNEGVITVEESNTFGLQLELTEGMRFDKGYISGYFVTDAERQEAVLEDPYILLVSSKVSTVKDLLPLLEKVIQAGKPLLIIAEDVEGEALSTLVVNKIRGTFKSVAVKAPGFGDRRKAMLQDMAILTGGQVVSEEVGLSLETADVALLGTARKVVVTKDETTIVEGAGDSDAIAGRVAQIRAEIENSDSDYDREKLQERLAKLAGGVAVIKAGAATEVELKERKHRIEDAVRNAKAAVEEGIVAGGGVALLQSAPVLEDLGLSGDEATGANIVRVALSAPLKQIAFNGGLEPGVVAEKVSNLPAGHGLNAATGEYEDLLKAGVADPVKVTRSALQNAASIAALFLTTEAVVADKPEKAAAPAGDPTGGMGGMDF.

ATP is bound by residues 29–32 (TLGP), 86–90 (DGTTT), glycine 413, 476–478 (NAA), and aspartate 492.

It belongs to the chaperonin (HSP60) family. In terms of assembly, forms a cylinder of 14 subunits composed of two heptameric rings stacked back-to-back. Interacts with the co-chaperonin GroES.

The protein resides in the secreted. The protein localises to the capsule. Its subcellular location is the cell surface. It localises to the cell wall. It carries out the reaction ATP + H2O + a folded polypeptide = ADP + phosphate + an unfolded polypeptide.. Together with its co-chaperonin GroES, plays an essential role in assisting protein folding. The GroEL-GroES system forms a nano-cage that allows encapsulation of the non-native substrate proteins and provides a physical environment optimized to promote and accelerate protein folding. The chain is Chaperonin GroEL 2 from Mycolicibacterium gilvum (strain PYR-GCK) (Mycobacterium gilvum (strain PYR-GCK)).